The primary structure comprises 190 residues: MSERTLPDDLVELGRVASAYGVKGWIKVQPHSAQADVLRAAKQWWLAATPKSAPRVYAVQQCRVHGATAVAQLEGIADRDQAEALRGATVWVSRALFPAAAEDEYYWIDLVGCAFYSSVSGSDVRVGVVEEVFDNPAHAILRVVCQDAEGKALLDAKGRAREMLVPFVSAHIQAVDIAARRIDSDWPLED.

The region spanning 102 to 190 (EDEYYWIDLV…RIDSDWPLED (89 aa)) is the PRC barrel domain.

The protein belongs to the RimM family. As to quaternary structure, binds ribosomal protein uS19.

It localises to the cytoplasm. Functionally, an accessory protein needed during the final step in the assembly of 30S ribosomal subunit, possibly for assembly of the head region. Essential for efficient processing of 16S rRNA. May be needed both before and after RbfA during the maturation of 16S rRNA. It has affinity for free ribosomal 30S subunits but not for 70S ribosomes. The chain is Ribosome maturation factor RimM from Bordetella avium (strain 197N).